The sequence spans 259 residues: uncharacterized protein (259 aa).

This sequence belongs to the methyltransferase superfamily.

This is an uncharacterized protein from Mycobacteroides abscessus (strain ATCC 19977 / DSM 44196 / CCUG 20993 / CIP 104536 / JCM 13569 / NCTC 13031 / TMC 1543 / L948) (Mycobacterium abscessus).